A 139-amino-acid polypeptide reads, in one-letter code: Small ribosomal subunit protein uS12 (139 aa).

A disordered region spans residues 1 to 44 (MPTINQLVRKPRQSKITKSKSPALNKGYNSFKKSLTDVKSPQKR). Basic residues predominate over residues 9 to 18 (RKPRQSKITK). Over residues 19 to 39 (SKSPALNKGYNSFKKSLTDVK) the composition is skewed to polar residues. A 3-methylthioaspartic acid modification is found at Asp-102.

It belongs to the universal ribosomal protein uS12 family. As to quaternary structure, part of the 30S ribosomal subunit. Contacts proteins S8 and S17. May interact with IF1 in the 30S initiation complex.

Its function is as follows. With S4 and S5 plays an important role in translational accuracy. In terms of biological role, interacts with and stabilizes bases of the 16S rRNA that are involved in tRNA selection in the A site and with the mRNA backbone. Located at the interface of the 30S and 50S subunits, it traverses the body of the 30S subunit contacting proteins on the other side and probably holding the rRNA structure together. The combined cluster of proteins S8, S12 and S17 appears to hold together the shoulder and platform of the 30S subunit. This is Small ribosomal subunit protein uS12 from Lysinibacillus sphaericus (strain C3-41).